Consider the following 277-residue polypeptide: Phosphonates import ATP-binding protein PhnC 2 (277 aa).

Positions 5–253 (IHVQGLNKTF…FLNDLYGADA (249 aa)) constitute an ABC transporter domain. An ATP-binding site is contributed by 37–44 (GASGSGKS).

Belongs to the ABC transporter superfamily. Phosphonates importer (TC 3.A.1.9.1) family. The complex is composed of two ATP-binding proteins (PhnC), two transmembrane proteins (PhnE) and a solute-binding protein (PhnD).

The protein resides in the cell inner membrane. It carries out the reaction phosphonate(out) + ATP + H2O = phosphonate(in) + ADP + phosphate + H(+). Part of the ABC transporter complex PhnCDE involved in phosphonates import. Responsible for energy coupling to the transport system. In Pseudomonas savastanoi pv. phaseolicola (strain 1448A / Race 6) (Pseudomonas syringae pv. phaseolicola (strain 1448A / Race 6)), this protein is Phosphonates import ATP-binding protein PhnC 2.